We begin with the raw amino-acid sequence, 433 residues long: Serine hydroxymethyltransferase (433 aa).

Ala-121–Val-123 is a (6S)-5,6,7,8-tetrahydrofolate binding site. Lys-227 carries the N6-(pyridoxal phosphate)lysine modification. Glu-243 contacts (6S)-5,6,7,8-tetrahydrofolate.

Belongs to the SHMT family. Homodimer. Pyridoxal 5'-phosphate serves as cofactor.

It localises to the cytoplasm. Its pathway is amino-acid biosynthesis; glycine biosynthesis; glycine from L-serine: step 1/1. Catalyzes the reversible interconversion of serine and glycine with a modified folate serving as the one-carbon carrier. Also exhibits a pteridine-independent aldolase activity toward beta-hydroxyamino acids, producing glycine and aldehydes, via a retro-aldol mechanism. In Saccharolobus islandicus (strain L.S.2.15 / Lassen #1) (Sulfolobus islandicus), this protein is Serine hydroxymethyltransferase.